The sequence spans 282 residues: Virginiamycin B lyase (282 aa).

Substrate is bound at residue His217. Mg(2+) is bound at residue Glu256. Residue His258 is the Proton acceptor of the active site. Glu273 provides a ligand contact to Mg(2+).

Belongs to the Vgb family. Monomer. Mg(2+) serves as cofactor.

In terms of biological role, inactivates the type B streptogramin antibiotics by linearizing the lactone ring at the ester linkage, generating a free phenylglycine carboxylate and converting the threonyl moiety into 2-amino-butenoic acid. This chain is Virginiamycin B lyase, found in Mycolicibacterium smegmatis (strain ATCC 700084 / mc(2)155) (Mycobacterium smegmatis).